The chain runs to 1235 residues: Gem-associated protein 5 (1235 aa).

The WD 1 repeat unit spans residues 55 to 102 (STRINILALDVSPMWGLGNGGPTKPFAIVGDDLSVQVWDCALGEAVIG). The segment at 227 to 263 (NNLALSAEEWRSRNGGQEEKPKTKPPPLTKSKAAESD) is disordered. Positions 234-248 (EEWRSRNGGQEEKPK) are enriched in basic and acidic residues. Residues S289, S290, S351, and S354 each carry the phosphoserine modification. The disordered stretch occupies residues 340 to 368 (DCEPTKPTGPLSDASTISNKNDASDSTEG). Polar residues predominate over residues 352–368 (DASTISNKNDASDSTEG). T355 bears the Phosphothreonine mark. A Phosphoserine modification is found at S357. T411 carries the post-translational modification Phosphothreonine. WD repeat units follow at residues 428 to 469 (ISAE…HAGK), 475 to 512 (KTAGKLNNVYWLNNHVIVSLSRHQLFFWSVEFERKMLR), 565 to 605 (TVAF…TSCL), 611 to 650 (YVSSNVYCLAWSPNCLELAFGTFDGTVGILDVERMKVKTH), 690 to 730 (TIVN…EKSW), 739 to 779 (LFAR…RNWK), and 788 to 828 (TEKA…KPPL). Residues 443-447 (LETLL) carry the LXXLL motif motif. Basic and acidic residues predominate over residues 963 to 980 (KEQNNRSAKECPKCKEQS). A disordered region spans residues 963-983 (KEQNNRSAKECPKCKEQSPDS).

In terms of assembly, component of the core survival motor neuron (SMN) complex composed of Smn, Gem2, Gem3, rig/Gem5 and one of 3 almost identical Gem4 paralogs encoded by Glos/Gem4a, Gem4b or Gem4c. Interacts with nuclear receptors EcR, svp (seven up), usp (ultraspiracle), Hr39 and Hr3. As to expression, expressed in the brain and salivary glands of early and late second instar larvae. Expressed in nurse cells and oocytes.

The protein localises to the nucleus. The protein resides in the cytoplasm. Its subcellular location is the U-body. It localises to the gem. In terms of biological role, component of the survival motor neuron (SMN) complex that catalyzes the assembly of small nuclear ribonucleoproteins (snRNPs), the building blocks of the spliceosome, and thereby plays an important role in the splicing of cellular pre-mRNAs. Nuclear receptor cofactor for the ecdysone-regulated processes of molting and puparium formation. Acts downstream from ecdysone biosynthesis and release to control the expression of specific ecdysone-regulated genes such as Eip74EF (E74). Essential in muscle and neuronal tissues for motor function, including climbing ability and flight. This chain is Gem-associated protein 5, found in Drosophila melanogaster (Fruit fly).